The sequence spans 207 residues: Large ribosomal subunit protein bL25 (207 aa).

Belongs to the bacterial ribosomal protein bL25 family. CTC subfamily. Part of the 50S ribosomal subunit; part of the 5S rRNA/L5/L18/L25 subcomplex. Contacts the 5S rRNA. Binds to the 5S rRNA independently of L5 and L18.

In terms of biological role, this is one of the proteins that binds to the 5S RNA in the ribosome where it forms part of the central protuberance. The polypeptide is Large ribosomal subunit protein bL25 (Bordetella petrii (strain ATCC BAA-461 / DSM 12804 / CCUG 43448)).